We begin with the raw amino-acid sequence, 236 residues long: MKMMDANEIISFIQNSKKSTPVKVYIKGSLEGIDFGPSAKTFITGNTGVVFGEWQEIQAALEANKEKIDDYVIENDRRNSAIPLLDLKGVKARIEPGAIIRDQVEIGDNAVIMMGAVINIGAVVGEGTMIDMNAVLGGRATVGKNCHVGAGAVLAGVIEPPSAKPVIVEDDVVIGANAVILEGVTVGKGAVVAAGAIVVEDVPPYTVVAGVPARVIKQIDEKTRAKTEIKQELRQL.

This sequence belongs to the transferase hexapeptide repeat family. DapH subfamily.

It catalyses the reaction (S)-2,3,4,5-tetrahydrodipicolinate + acetyl-CoA + H2O = L-2-acetamido-6-oxoheptanedioate + CoA. It participates in amino-acid biosynthesis; L-lysine biosynthesis via DAP pathway; LL-2,6-diaminopimelate from (S)-tetrahydrodipicolinate (acetylase route): step 1/3. In terms of biological role, catalyzes the transfer of an acetyl group from acetyl-CoA to tetrahydrodipicolinate. The polypeptide is 2,3,4,5-tetrahydropyridine-2,6-dicarboxylate N-acetyltransferase (Geobacillus sp. (strain WCH70)).